The following is a 346-amino-acid chain: Holliday junction branch migration complex subunit RuvB (346 aa).

A large ATPase domain (RuvB-L) region spans residues 2 to 183; that stretch reads TDDRIIGAGA…FGIVQRLEFY (182 aa). ATP contacts are provided by residues Ile-22, Arg-23, Gly-64, Lys-67, Thr-68, Thr-69, 130-132, Arg-173, Tyr-183, and Arg-220; that span reads EDF. Position 68 (Thr-68) interacts with Mg(2+). The tract at residues 184–254 is small ATPAse domain (RuvB-S); it reads SVEELTRIVR…VAQAAMKMLK (71 aa). The head domain (RuvB-H) stretch occupies residues 257–346; sequence PEGFDELDRR…DLFAEVPDVG (90 aa). 3 residues coordinate DNA: Arg-293, Arg-312, and Arg-317.

This sequence belongs to the RuvB family. In terms of assembly, homohexamer. Forms an RuvA(8)-RuvB(12)-Holliday junction (HJ) complex. HJ DNA is sandwiched between 2 RuvA tetramers; dsDNA enters through RuvA and exits via RuvB. An RuvB hexamer assembles on each DNA strand where it exits the tetramer. Each RuvB hexamer is contacted by two RuvA subunits (via domain III) on 2 adjacent RuvB subunits; this complex drives branch migration. In the full resolvosome a probable DNA-RuvA(4)-RuvB(12)-RuvC(2) complex forms which resolves the HJ.

Its subcellular location is the cytoplasm. The enzyme catalyses ATP + H2O = ADP + phosphate + H(+). In terms of biological role, the RuvA-RuvB-RuvC complex processes Holliday junction (HJ) DNA during genetic recombination and DNA repair, while the RuvA-RuvB complex plays an important role in the rescue of blocked DNA replication forks via replication fork reversal (RFR). RuvA specifically binds to HJ cruciform DNA, conferring on it an open structure. The RuvB hexamer acts as an ATP-dependent pump, pulling dsDNA into and through the RuvAB complex. RuvB forms 2 homohexamers on either side of HJ DNA bound by 1 or 2 RuvA tetramers; 4 subunits per hexamer contact DNA at a time. Coordinated motions by a converter formed by DNA-disengaged RuvB subunits stimulates ATP hydrolysis and nucleotide exchange. Immobilization of the converter enables RuvB to convert the ATP-contained energy into a lever motion, pulling 2 nucleotides of DNA out of the RuvA tetramer per ATP hydrolyzed, thus driving DNA branch migration. The RuvB motors rotate together with the DNA substrate, which together with the progressing nucleotide cycle form the mechanistic basis for DNA recombination by continuous HJ branch migration. Branch migration allows RuvC to scan DNA until it finds its consensus sequence, where it cleaves and resolves cruciform DNA. In Stenotrophomonas maltophilia (strain K279a), this protein is Holliday junction branch migration complex subunit RuvB.